A 339-amino-acid chain; its full sequence is Phenylalanine--tRNA ligase alpha subunit (339 aa).

Mg(2+) is bound at residue Glu254.

The protein belongs to the class-II aminoacyl-tRNA synthetase family. Phe-tRNA synthetase alpha subunit type 1 subfamily. In terms of assembly, tetramer of two alpha and two beta subunits. The cofactor is Mg(2+).

It is found in the cytoplasm. It catalyses the reaction tRNA(Phe) + L-phenylalanine + ATP = L-phenylalanyl-tRNA(Phe) + AMP + diphosphate + H(+). The sequence is that of Phenylalanine--tRNA ligase alpha subunit from Clostridium acetobutylicum (strain ATCC 824 / DSM 792 / JCM 1419 / IAM 19013 / LMG 5710 / NBRC 13948 / NRRL B-527 / VKM B-1787 / 2291 / W).